The primary structure comprises 777 residues: Serine/threonine-protein kinase PTK2 (777 aa).

Residues 21–174 are disordered; it reads NKLRGNNDST…ISSGSASSTN (154 aa). Residues 30-41 show a composition bias toward low complexity; the sequence is TPAAAPAPVPTK. 2 stretches are compositionally biased toward polar residues: residues 50 to 61 and 83 to 133; these read AHISRSASTNTP and RRST…SQHM. Positions 149–172 are enriched in low complexity; that stretch reads SSVRGSSYSRHGSGSHISSGSASS. Residues 222–529 enclose the Protein kinase domain; sequence DKDNKTIGSG…MEDLFNDPWF (308 aa). Residues 228-236 and K252 each bind ATP; that span reads IGSGGSSEV. Residue D355 is the Proton acceptor of the active site. Disordered stretches follow at residues 564 to 705 and 728 to 764; these read DAHP…EITE and SVSGAATAPIPRRDPSNRSIHSNATSTGTAGRKKKVV. Polar residues-rich tracts occupy residues 575 to 592 and 648 to 672; these read TDTNGGLHSDSENPAGTH and TNTTAEADNEKAQTVPTSAVDTNEF. The segment covering 677–694 has biased composition (low complexity); that stretch reads NATTTDNDNVNTKATTAD. Polar residues predominate over residues 744-756; the sequence is NRSIHSNATSTGT.

Belongs to the protein kinase superfamily. Ser/Thr protein kinase family.

The catalysed reaction is L-seryl-[protein] + ATP = O-phospho-L-seryl-[protein] + ADP + H(+). It catalyses the reaction L-threonyl-[protein] + ATP = O-phospho-L-threonyl-[protein] + ADP + H(+). This Candida glabrata (strain ATCC 2001 / BCRC 20586 / JCM 3761 / NBRC 0622 / NRRL Y-65 / CBS 138) (Yeast) protein is Serine/threonine-protein kinase PTK2 (PTK2).